A 131-amino-acid polypeptide reads, in one-letter code: Profilin-3 (131 aa).

Belongs to the profilin family. Occurs in many kinds of cells as a complex with monomeric actin in a 1:1 ratio.

It is found in the cytoplasm. It localises to the cytoskeleton. In terms of biological role, binds to actin and affects the structure of the cytoskeleton. At high concentrations, profilin prevents the polymerization of actin, whereas it enhances it at low concentrations. By binding to PIP2, it inhibits the formation of IP3 and DG. In Lilium longiflorum (Trumpet lily), this protein is Profilin-3.